The sequence spans 414 residues: WW domain-containing oxidoreductase (414 aa).

The segment at 1-24 (MAALRYAGLDDTDSEDELPPGWEE) is disordered. At T12 the chain carries Phosphothreonine. A Phosphoserine modification is found at S14. The region spanning 16–49 (DELPPGWEERTTKDGWVYYANHTEEKTQWEHPKT) is the WW 1 domain. Y33 is subject to Phosphotyrosine. The Nuclear localization signal signature appears at 50–55 (GKRKRV). Residues 57–90 (GDLPYGWEQGTDENGQVFFVDHINKRTTYLDPRL) enclose the WW 2 domain. An interaction with MAPT region spans residues 125–414 (KVVVVTGANS…IQERLGSQSG (290 aa)). An NADP(+)-binding site is contributed by 131–137 (GANSGIG). A mediates targeting to the mitochondria region spans residues 209-273 (CNAATFALPW…RFTDINDSLG (65 aa)). S260 contacts substrate. At Y287 the chain carries Phosphotyrosine; by TNK2. Y293 (proton acceptor) is an active-site residue.

The protein belongs to the short-chain dehydrogenases/reductases (SDR) family. As to quaternary structure, interacts with TP53, p73/TP73 and MAPK8. Interacts with MAPT/TAU, RUNX2 and HYAL2. Forms a ternary complex with TP53 and MDM2. Interacts with ERBB4, LITAF and WBP1. Interacts with DVL1, DVL2 and DVL3. May interact with FAM189B and SCOTIN. Interacts with TNK2. Interacts with TMEM207. Interacts (via WW domain) with VOPP1. Phosphorylated upon genotoxic stress. Phosphorylation of Tyr-33 regulates interaction with TP53, TP73 and MAPK8. May also regulate proapoptotic activity. Phosphorylation by TNK2 is associated with polyubiquitination and degradation. In terms of processing, ubiquitinated when phosphorylated by TNK2, leading to its degradation.

It is found in the cytoplasm. The protein resides in the nucleus. The protein localises to the mitochondrion. Its subcellular location is the golgi apparatus. It localises to the lysosome. Functionally, putative oxidoreductase. Acts as a tumor suppressor and plays a role in apoptosis. May function synergistically with p53/TP53 to control genotoxic stress-induced cell death. Plays a role in TGFB1 signaling and TGFB1-mediated cell death. May also play a role in tumor necrosis factor (TNF)-mediated cell death. Required for normal bone development. Inhibits Wnt signaling, probably by sequestering DVL2 in the cytoplasm. This Pongo abelii (Sumatran orangutan) protein is WW domain-containing oxidoreductase (WWOX).